Reading from the N-terminus, the 372-residue chain is MSKRDYYEVLGVAKNASDEEIKKAYRKLAMKHHPDRNPGDHAAEDKFKEAKQAYEILSDSDKRAAYDQFGHAGVDPQSGMGGGGFGGGGFSDAFSDIFGDIFGGGGGNRRDRVYRGADLRYNLEIGLEEAARGTETKIRIPTLEECGTCHGSGAKPGTQPTTCSACGGHGQVRVQQGFFSVQQTCPRCGGTGKMVSDPCPSCHGEGRVKKHKTLSVKIPAGVDSGDRIRLAGEGEAGVNGGPSGDLYVVIHLKDHPVFKRDGDDLHCEMPISFATAALGGEVEIPTLDGHAKIKIPAETQSGKVFRLRGKGIKGVRSHAPGDLLCHMLVETPVNLSERQRELLREFEALSPGRNNNPRAQSFMDKVKSFFGT.

Residues 5–70 (DYYEVLGVAK…DKRAAYDQFG (66 aa)) enclose the J domain. The CR-type zinc finger occupies 133–211 (GTETKIRIPT…CHGEGRVKKH (79 aa)). 8 residues coordinate Zn(2+): cysteine 146, cysteine 149, cysteine 163, cysteine 166, cysteine 185, cysteine 188, cysteine 199, and cysteine 202. CXXCXGXG motif repeat units follow at residues 146 to 153 (CGTCHGSG), 163 to 170 (CSACGGHG), 185 to 192 (CPRCGGTG), and 199 to 206 (CPSCHGEG).

It belongs to the DnaJ family. As to quaternary structure, homodimer. Zn(2+) serves as cofactor.

Its subcellular location is the cytoplasm. Functionally, participates actively in the response to hyperosmotic and heat shock by preventing the aggregation of stress-denatured proteins and by disaggregating proteins, also in an autonomous, DnaK-independent fashion. Unfolded proteins bind initially to DnaJ; upon interaction with the DnaJ-bound protein, DnaK hydrolyzes its bound ATP, resulting in the formation of a stable complex. GrpE releases ADP from DnaK; ATP binding to DnaK triggers the release of the substrate protein, thus completing the reaction cycle. Several rounds of ATP-dependent interactions between DnaJ, DnaK and GrpE are required for fully efficient folding. Also involved, together with DnaK and GrpE, in the DNA replication of plasmids through activation of initiation proteins. In Thiobacillus denitrificans (strain ATCC 25259 / T1), this protein is Chaperone protein DnaJ.